The following is a 663-amino-acid chain: Beta-galactosidase BgaH (663 aa).

Arginine 103 is a substrate binding site. Position 107 (cysteine 107) interacts with Zn(2+). A substrate-binding site is contributed by asparagine 141. The Proton donor role is filled by glutamate 142. 3 residues coordinate Zn(2+): cysteine 151, cysteine 153, and cysteine 156. Catalysis depends on glutamate 311, which acts as the Nucleophile. Residues tryptophan 319 and 359–362 contribute to the substrate site; that span reads EQYH.

It belongs to the glycosyl hydrolase 42 family. In terms of assembly, homodimer.

The catalysed reaction is Hydrolysis of terminal non-reducing beta-D-galactose residues in beta-D-galactosides.. Requires 4 M NaCl for maximal activity. Loss of activity if DTT or beta-mercaptoethanol is omitted from buffers. Addition of 5-20 mM EDTA, 1 mM Cu(2+) or 1 mM Zn(2+) results in loss of activity. When overexpressed, cleaves several different substrates including o-nitrophenyl-beta-D-galactopyranoside (ONPG), chromogen 5-bromo-4-chloro-3-indolyl-beta-D-galactopyranoside (X-Gal) and lactulose, but not lactose. Also has beta-D-fucosidase activity. No beta-L-fucosidase, beta-glucosidase, beta-arabinosidase or beta-xylosidase activity. The protein is Beta-galactosidase BgaH of Haloferax lucentense (strain DSM 14919 / JCM 9276 / NCIMB 13854 / Aa 2.2) (Haloferax alicantei).